Consider the following 44-residue polypeptide: Opistoporin-2 (44 aa).

In terms of tissue distribution, expressed by the venom gland.

It is found in the secreted. It localises to the target cell membrane. In terms of biological role, at high concentrations, acts as a pore former in cellular membranes and causes the leakage of the cells. At submicromolar concentrations, degranulates granulocytes and has a weak hemolytic activity against human erythrocytes. Also strongly inhibits the production of superoxide anions. Has a strong antibacterial activity against Gram-negative bacteria but is less active against Gram-positive bacteria. Also has antifungal activity. This chain is Opistoporin-2, found in Opistophthalmus carinatus (African yellow leg scorpion).